A 348-amino-acid polypeptide reads, in one-letter code: Phosphoribosylformylglycinamidine cyclo-ligase (348 aa).

This sequence belongs to the AIR synthase family.

It localises to the cytoplasm. The catalysed reaction is 2-formamido-N(1)-(5-O-phospho-beta-D-ribosyl)acetamidine + ATP = 5-amino-1-(5-phospho-beta-D-ribosyl)imidazole + ADP + phosphate + H(+). It functions in the pathway purine metabolism; IMP biosynthesis via de novo pathway; 5-amino-1-(5-phospho-D-ribosyl)imidazole from N(2)-formyl-N(1)-(5-phospho-D-ribosyl)glycinamide: step 2/2. In Cereibacter sphaeroides (strain ATCC 17029 / ATH 2.4.9) (Rhodobacter sphaeroides), this protein is Phosphoribosylformylglycinamidine cyclo-ligase.